The following is a 618-amino-acid chain: Sulfite reductase [NADPH] flavoprotein alpha-component (618 aa).

The Flavodoxin-like domain maps to 64–202 (VTLISASQTG…QAQQWRQQVV (139 aa)). FMN-binding positions include 70-75 (SQTGNA), 117-120 (STQG), and 153-162 (LGDTSYEHFC). One can recognise an FAD-binding FR-type domain in the interval 253–467 (TAPLTAQLSV…IEHNDNFRLP (215 aa)). FAD contacts are provided by residues Thr-341, Lys-375, 405-408 (RLYS), 423-425 (TVG), Tyr-429, and 438-441 (GGAS). Residues 538 to 539 (SR), 544 to 548 (KIYVQ), and Asp-580 each bind NADP(+). Tyr-618 serves as a coordination point for FAD.

Belongs to the NADPH-dependent sulphite reductase flavoprotein subunit CysJ family. This sequence in the N-terminal section; belongs to the flavodoxin family. The protein in the C-terminal section; belongs to the flavoprotein pyridine nucleotide cytochrome reductase family. In terms of assembly, alpha(8)-beta(8). The alpha component is a flavoprotein, the beta component is a hemoprotein. FAD is required as a cofactor. The cofactor is FMN.

The catalysed reaction is hydrogen sulfide + 3 NADP(+) + 3 H2O = sulfite + 3 NADPH + 4 H(+). It participates in sulfur metabolism; hydrogen sulfide biosynthesis; hydrogen sulfide from sulfite (NADPH route): step 1/1. Its function is as follows. Component of the sulfite reductase complex that catalyzes the 6-electron reduction of sulfite to sulfide. This is one of several activities required for the biosynthesis of L-cysteine from sulfate. The flavoprotein component catalyzes the electron flow from NADPH -&gt; FAD -&gt; FMN to the hemoprotein component. This chain is Sulfite reductase [NADPH] flavoprotein alpha-component, found in Yersinia pseudotuberculosis serotype I (strain IP32953).